A 413-amino-acid chain; its full sequence is Multidrug resistance protein MdtA (413 aa).

The signal sequence occupies residues 1-20 (MKGSNTFRWAIAIGVVVAAA). 2 disordered regions span residues 31-57 (SPTA…RDGP) and 392-413 (PQTT…GARA). Positions 397 to 413 (ADEKSPSRHEGQKGARA) are enriched in basic and acidic residues.

This sequence belongs to the membrane fusion protein (MFP) (TC 8.A.1) family. As to quaternary structure, part of a tripartite efflux system composed of MdtA, MdtB and MdtC.

Its subcellular location is the cell inner membrane. This chain is Multidrug resistance protein MdtA, found in Salmonella heidelberg (strain SL476).